A 149-amino-acid chain; its full sequence is Myosin light chain 1 (149 aa).

EF-hand domains lie at 2–37 (SATR…IGYN), 81–116 (AKTE…LGEK), and 117–149 (LTDA…VLRQ). Positions 15, 94, 98, 100, and 105 each coordinate Ca(2+). K116 is covalently cross-linked (Glycyl lysine isopeptide (Lys-Gly) (interchain with G-Cter in ubiquitin)). Residues D123, K127, and D132 each contribute to the Ca(2+) site.

In terms of assembly, interacts with MYO1, MYO2 and IQG1 by binding to their IQ domains. Interacts with SEC4.

It is found in the bud neck. The protein resides in the bud tip. Essential light chain for the class II conventional myosin MYO1. Also acts as light chain for the class V unconventional myosin MYO2 and for IQG1. Involved in the assembly of the contractile actomyosin ring at the bud neck during cytokinesis by recruiting IQG1 to the bud neck. Also required for chitin and MYO2-dependent secretory vesicle deposition to the center of the bud neck for septum formation. May stabilize MYO2 by binding to its IQ domains. Its major function is probably not to regulate MYO1 activity, but rather to coordinate actin ring formation and targeted membrane deposition during cytokinesis via its interactions with MYO1, IQG1 and MYO2. In Saccharomyces cerevisiae (strain ATCC 204508 / S288c) (Baker's yeast), this protein is Myosin light chain 1 (MLC1).